A 574-amino-acid polypeptide reads, in one-letter code: Excitatory amino acid transporter 2 (574 aa).

Residues 1-44 (MASTEGANNMPKQVEVRMHDSHLGSEEPKHRHLGLRLCDKLGKN) lie on the Cytoplasmic side of the membrane. A phosphoserine mark is found at serine 3, serine 21, and serine 25. Cysteine 38 carries S-palmitoyl cysteine lipidation. Residues 45-64 (LLLTLTVFGVILGAVCGGLL) form a helical membrane-spanning segment. At 65 to 87 (RLASPIHPDVVMLIAFPGDILMR) the chain is on the extracellular side. A helical membrane pass occupies residues 88–108 (MLKMLILPLIISSLITGLSGL). Residues 109–120 (DAKASGRLGTRA) lie on the Cytoplasmic side of the membrane. Residues 121–142 (MVYYMSTTIIAAVLGVILVLAI) traverse the membrane as a helical segment. Over 143–235 (HPGNPKLKKQ…TKMVIKKGLE (93 aa)) the chain is Extracellular. 2 N-linked (GlcNAc...) asparagine glycosylation sites follow: asparagine 206 and asparagine 216. Residues 236–259 (FKDGMNVLGLIGFFIAFGIAMGKM) form a helical membrane-spanning segment. The Cytoplasmic segment spans residues 260-268 (GDQAKLMVD). A helical membrane pass occupies residues 269 to 296 (FFNILNEIVMKLVIMIMWYSPLGIACLI). The Extracellular portion of the chain corresponds to 297 to 317 (CGKIIAIKDLEVVARQLGMYM). Residues 318-339 (VTVIIGLIIHGGIFLPLIYFVV) form a helical membrane-spanning segment. At 340-344 (TRKNP) the chain is on the cytoplasmic side. The segment at residues 345 to 375 (FSFFAGIFQAWITALGTASSAGTLPVTFRCL) is an intramembrane region (discontinuously helical). 362 to 364 (ASS) is a binding site for L-aspartate. At 376 to 384 (EENLGIDKR) the chain is on the cytoplasmic side. The helical transmembrane segment at 385–411 (VTRFVLPVGATINMDGTALYEAVAAIF) threads the bilayer. 3 residues coordinate Na(+): glycine 393, threonine 395, and asparagine 397. Threonine 401 lines the L-aspartate pocket. Over 412-424 (IAQMNGVVLDGGQ) the chain is Extracellular. The discontinuously helical intramembrane region spans 425 to 458 (IVTVSLTATLASVGAASIPSAGLVTMLLILTAVG). 442–446 (IPSAG) is an L-aspartate binding site. At 459–471 (LPTEDISLLVAVD) the chain is on the extracellular side. A helical transmembrane segment spans residues 472 to 493 (WLLDRMRTSVNVVGDSFGAGIV). 2 residues coordinate L-aspartate: aspartate 475 and asparagine 482. Na(+)-binding residues include asparagine 482 and aspartate 486. Over 494–574 (YHLSKSELDT…VEEEPWKREK (81 aa)) the chain is Cytoplasmic. Serine 506, serine 521, serine 532, and serine 534 each carry phosphoserine. Phosphotyrosine is present on tyrosine 539. Phosphoserine is present on residues serine 544, serine 560, and serine 564.

Belongs to the dicarboxylate/amino acid:cation symporter (DAACS) (TC 2.A.23) family. SLC1A2 subfamily. Homotrimer. Isoform 3 can oligomerize with isoform 1. Interacts with AJUBA. Glycosylated. Post-translationally, palmitoylation at Cys-38 is not required for correct subcellular localization, but is important for glutamate uptake activity.

It localises to the cell membrane. The catalysed reaction is K(+)(in) + L-glutamate(out) + 3 Na(+)(out) + H(+)(out) = K(+)(out) + L-glutamate(in) + 3 Na(+)(in) + H(+)(in). The enzyme catalyses K(+)(in) + L-aspartate(out) + 3 Na(+)(out) + H(+)(out) = K(+)(out) + L-aspartate(in) + 3 Na(+)(in) + H(+)(in). It catalyses the reaction D-aspartate(out) + K(+)(in) + 3 Na(+)(out) + H(+)(out) = D-aspartate(in) + K(+)(out) + 3 Na(+)(in) + H(+)(in). Its function is as follows. Sodium-dependent, high-affinity amino acid transporter that mediates the uptake of L-glutamate and also L-aspartate and D-aspartate. Functions as a symporter that transports one amino acid molecule together with two or three Na(+) ions and one proton, in parallel with the counter-transport of one K(+) ion. Mediates Cl(-) flux that is not coupled to amino acid transport; this avoids the accumulation of negative charges due to aspartate and Na(+) symport. Essential for the rapid removal of released glutamate from the synaptic cleft, and for terminating the postsynaptic action of glutamate. The chain is Excitatory amino acid transporter 2 from Homo sapiens (Human).